The sequence spans 2136 residues: MSRSRHARPSRLVRKEDVNKKKKNSQLRKTTKGANKNVASVKTLSPGKLKQLIQERDVKKKTEPKPPVPVRSLLTRAGAARMNLDRTEVLFQNPESLTCNGFTMALRSTSLSRRLSQPPLVVAKSKKVPLSKGLEKQHDCDYKILPALGVKHSENDSVPMQDTQVLPDIETLIGVQNPSLLKGKSQETTQFWSQRVEDSKINIPTHSGPAAEILPGPLEGTRCGEGLFSEETLNDTSGSPKMFAQDTVCAPFPQRATPKVTSQGNPSIQLEELGSRVESLKLSDSYLDPIKSEHDCYPTSSLNKVIPDLNLRNCLALGGSTSPTSVIKFLLAGSKQATLGAKPDHQEAFEATANQQEVSDTTSFLGQAFGAIPHQWELPGADPVHGEALGETPDLPEIPGAIPVQGEVFGTILDQQETLGMSGSVVPDLPVFLPVPPNPIATFNAPSKWPEPQSTVSYGLAVQGAIQILPLGSGHTPQSSSNSEKNSLPPVMAISNVENEKQVHISFLPANTQGFPLAPERGLFHASLGIAQLSQAGPSKSDRGSSQVSVTSTVHVVNTTVVTMPVPMVSTSSSSYTTLLPTLEKKKRKRCGVCEPCQQKTNCGECTYCKNRKNSHQICKKRKCEELKKKPSVVVPLEVIKENKRPQREKKPKVLKADFDNKPVNGPKSESMDYSRCGHGEEQKLELNPHTVENVTKNEDSMTGIEVEKWTQNKKSQLTDHVKGDFSANVPEAEKSKNSEVDKKRTKSPKLFVQTVRNGIKHVHCLPAETNVSFKKFNIEEFGKTLENNSYKFLKDTANHKNAMSSVATDMSCDHLKGRSNVLVFQQPGFNCSSIPHSSHSIINHHASIHNEGDQPKTPENIPSKEPKDGSPVQPSLLSLMKDRRLTLEQVVAIEALTQLSEAPSENSSPSKSEKDEESEQRTASLLNSCKAILYTVRKDLQDPNLQGEPPKLNHCPSLEKQSSCNTVVFNGQTTTLSNSHINSATNQASTKSHEYSKVTNSLSLFIPKSNSSKIDTNKSIAQGIITLDNCSNDLHQLPPRNNEVEYCNQLLDSSKKLDSDDLSCQDATHTQIEEDVATQLTQLASIIKINYIKPEDKKVESTPTSLVTCNVQQKYNQEKGTIQQKPPSSVHNNHGSSLTKQKNPTQKKTKSTPSRDRRKKKPTVVSYQENDRQKWEKLSYMYGTICDIWIASKFQNFGQFCPHDFPTVFGKISSSTKIWKPLAQTRSIMQPKTVFPPLTQIKLQRYPESAEEKVKVEPLDSLSLFHLKTESNGKAFTDKAYNSQVQLTVNANQKAHPLTQPSSPPNQCANVMAGDDQIRFQQVVKEQLMHQRLPTLPGISHETPLPESALTLRNVNVVCSGGITVVSTKSEEEVCSSSFGTSEFSTVDSAQKNFNDYAMNFFTNPTKNLVSITKDSELPTCSCLDRVIQKDKGPYYTHLGAGPSVAAVREIMENRYGQKGNAIRIEIVVYTGKEGKSSHGCPIAKWVLRRSSDEEKVLCLVRQRTGHHCPTAVMVVLIMVWDGIPLPMADRLYTELTENLKSYNGHPTDRRCTLNENRTCTCQGIDPETCGASFSFGCSWSMYFNGCKFGRSPSPRRFRIDPSSPLHEKNLEDNLQSLATRLAPIYKQYAPVAYQNQVEYENVARECRLGSKEGRPFSGVTACLDFCAHPHRDIHNMNNGSTVVCTLTREDNRSLGVIPQDEQLHVLPLYKLSDTDEFGSKEGMEAKIKSGAIEVLAPRRKKRTCFTQPVPRSGKKRAAMMTEVLAHKIRAVEKKPIPRIKRKNNSTTTNNSKPSSLPTLGSNTETVQPEVKSETEPHFILKSSDNTKTYSLMPSAPHPVKEASPGFSWSPKTASATPAPLKNDATASCGFSERSSTPHCTMPSGRLSGANAAAADGPGISQLGEVAPLPTLSAPVMEPLINSEPSTGVTEPLTPHQPNHQPSFLTSPQDLASSPMEEDEQHSEADEPPSDEPLSDDPLSPAEEKLPHIDEYWSDSEHIFLDANIGGVAIAPAHGSVLIECARRELHATTPVEHPNRNHPTRLSLVFYQHKNLNKPQHGFELNKIKFEAKEAKNKKMKASEQKDQAANEGPEQSSEVNELNQIPSHKALTLTHDNVVTVSPYALTHVAGPYNHWV.

Basic residues-rich tracts occupy residues 1 to 12 and 20 to 31; these read MSRSRHARPSRL and KKKKNSQLRKTT. Residues 1–47 are disordered; the sequence is MSRSRHARPSRLVRKEDVNKKKKNSQLRKTTKGANKNVASVKTLSPG. The span at 32–43 shows a compositional bias: polar residues; that stretch reads KGANKNVASVKT. Residues 528 to 674 are sufficient for binding to genomic CpG islands; the sequence is LGIAQLSQAG…NGPKSESMDY (147 aa). The segment at 584–625 adopts a CXXC-type zinc-finger fold; the sequence is EKKKRKRCGVCEPCQQKTNCGECTYCKNRKNSHQICKKRKCE. Zn(2+)-binding residues include cysteine 591, cysteine 594, cysteine 597, cysteine 603, cysteine 606, cysteine 609, cysteine 619, and cysteine 624. Composition is skewed to basic and acidic residues over residues 712 to 724, 732 to 743, and 849 to 869; these read QNKKSQLTDHVKG, EAEKSKNSEVDK, and IHNEGDQPKTPENIPSKEPKD. 4 disordered regions span residues 712–746, 849–876, 899–923, and 1119–1169; these read QNKKSQLTDHVKGDFSANVPEAEKSKNSEVDKKRT, IHNEGDQPKTPENIPSKEPKDGSPVQPS, QLSEAPSENSSPSKSEKDEESEQRT, and EKGT…VSYQ. Serine 871 is subject to Phosphoserine. Positions 901 to 911 are enriched in low complexity; it reads SEAPSENSSPS. The span at 1119–1139 shows a compositional bias: polar residues; that stretch reads EKGTIQQKPPSSVHNNHGSSL. Residues 1146–1163 show a composition bias toward basic residues; the sequence is TQKKTKSTPSRDRRKKKP. Zn(2+) contacts are provided by cysteine 1422, cysteine 1424, cysteine 1482, histidine 1508, and cysteine 1510. A 2-oxoglutarate-binding site is contributed by arginine 1551. The Zn(2+) site is built by cysteine 1561, cysteine 1563, cysteine 1579, and cysteine 1588. An interaction with DNA region spans residues 1580 to 1593; it reads SWSMYFNGCKFGRS. Residue lysine 1589 forms a Glycyl lysine isopeptide (Lys-Gly) (interchain with G-Cter in ubiquitin) linkage. Cysteine 1648 is a Zn(2+) binding site. Cysteine 1664 provides a ligand contact to 2-oxoglutarate. Histidine 1670 is a Zn(2+) binding site. Residues histidine 1672 and aspartate 1674 each contribute to the Fe cation site. Residue asparagine 1677 coordinates substrate. Position 1706 (histidine 1706) interacts with 2-oxoglutarate. Disordered stretches follow at residues 1774-1897 and 1919-1984; these read EKKP…AAAD and EPLI…SPAE. The span at 1786-1800 shows a compositional bias: low complexity; the sequence is NSTTTNNSKPSSLPT. 2 stretches are compositionally biased toward polar residues: residues 1824–1833 and 1937–1953; these read SSDNTKTYSL and HQPNHQPSFLTSPQDLA. Over residues 1957–1976 the composition is skewed to acidic residues; it reads MEEDEQHSEADEPPSDEPLS. A Fe cation-binding site is contributed by histidine 2028. 2043-2045 is a binding site for 2-oxoglutarate; that stretch reads RLS. A substrate-binding site is contributed by 2049–2051; the sequence is YQH. Histidine 2059 serves as a coordination point for Zn(2+). Residues 2074–2087 show a composition bias toward basic and acidic residues; it reads KNKKMKASEQKDQA. Residues 2074–2100 are disordered; sequence KNKKMKASEQKDQAANEGPEQSSEVNE.

This sequence belongs to the TET family. Interacts with SIN3A; recruits the transcriptional corepressor SIN3A to gene promoters. Interacts with HCFC1. Interacts (via C-terminus) with OGT. Found in a complex composed of at least SINHCAF, SIN3A, HDAC1, SAP30, RBBP4, OGT and TET1. Interacts with QSER1. Interacts with NONO (via DNA-binding domain); this interaction recruits TET1 to genomic loci. Interacts with FOXA2; this interaction may recruit TET1 to specific enhancers to preserve their unmethylated status and hence allowing gene expression. Interacts with RNF2. Directly interacts (via C-terminus) with the DCAF1 component of the CRL4(VprBP) E3 ubiquitin-protein ligase complex. In terms of assembly, interacts with UHRF1; this interaction induces the recruitment of TET1 to replicating heterochromatin. Interacts with DCAF1. Fe(2+) serves as cofactor. Zn(2+) is required as a cofactor. In terms of processing, glycosylated. Interaction with OGT leads to GlcNAcylation. Post-translationally, monoubiquitinated at Lys-1589 by the DCX (DDB1-CUL4-X-box) E3 ubiquitin-protein ligase complex called CRL4(VprBP) or CUL4A-RBX1-DDB1-DCAF1/VPRBP complex; this modification promotes binding to DNA. Expressed in fetal heart, lung and brain, and in adult skeletal muscle, thymus and ovary. Not detected in adult heart, lung or brain. Up-regulated in glioblastoma cells (at protein level). In terms of tissue distribution, expressed in embryonic stem cells (at protein level).

It is found in the nucleus. The protein localises to the chromosome. It catalyses the reaction a 5-methyl-2'-deoxycytidine in DNA + 2-oxoglutarate + O2 = a 5-hydroxymethyl-2'-deoxycytidine in DNA + succinate + CO2. The catalysed reaction is a 5-hydroxymethyl-2'-deoxycytidine in DNA + 2-oxoglutarate + O2 = a 5-formyl-2'-deoxycytidine in DNA + succinate + CO2 + H2O. The enzyme catalyses a 5-formyl-2'-deoxycytidine in DNA + 2-oxoglutarate + O2 = a 5-carboxyl-2'-deoxycytidine in DNA + succinate + CO2 + H(+). Its function is as follows. Dioxygenase that plays a key role in active DNA demethylation, by catalyzing the sequential oxidation of the modified genomic base 5-methylcytosine (5mC) into 5-hydroxymethylcytosine (5hmC), 5-formylcytosine (5fC), and 5-carboxylcytosine (5caC). In addition to its role in DNA demethylation, plays a more general role in chromatin regulation by recruiting histone modifying protein complexes to alter histone marks and chromatin accessibility, leading to both activation and repression of gene expression. Plays therefore a role in many biological processes, including stem cell maintenance, T- and B-cell development, inflammation regulation, genomic imprinting, neural activity or DNA repair. Involved in the balance between pluripotency and lineage commitment of cells and plays a role in embryonic stem cells maintenance and inner cell mass cell specification. Together with QSER1, plays an essential role in the protection and maintenance of transcriptional and developmental programs to inhibit the binding of DNMT3A/3B and therefore de novo methylation. May play a role in pancreatic beta-cell specification during development. In this context, may function as an upstream epigenetic regulator of PAX4 presumably through direct recruitment by FOXA2 to a PAX4 enhancer to preserve its unmethylated status, thereby potentiating PAX4 expression to adopt beta-cell fate during endocrine lineage commitment. Under DNA hypomethylation conditions, such as in female meiotic germ cells, may induce epigenetic reprogramming of pericentromeric heterochromatin (PCH), the constitutive heterochromatin of pericentromeric regions. PCH forms chromocenters in the interphase nucleus and chromocenters cluster at the prophase of meiosis. In this context, may also be essential for chromocenter clustering in a catalytic activity-independent manner, possibly through the recruitment polycomb repressive complex 1 (PRC1) to the chromocenters. During embryonic development, may be required for normal meiotic progression in oocytes and meiotic gene activation. Binds preferentially to DNA containing cytidine-phosphate-guanosine (CpG) dinucleotides over CpH (H=A, T, and C), hemimethylated-CpG and hemimethylated-hydroxymethyl-CpG. Functionally, dioxygenase that plays a key role in active DNA demethylation. Binds to promoters, particularly to those with high CG content. In hippocampal neurons, isoform 1 regulates the expression of a unique subset of genes compared to isoform 2, although some overlap exists between both isoforms, hence differentially regulates excitatory synaptic transmission. In hippocampal neuron cell cultures, isoform 1 controls both miniature excitatory postsynaptic current amplitude and frequency. Isoform 1 may regulate genes involved in hippocampal-dependent memory, leading to positive regulation of memory, contrary to isoform 2 that may decrease memory. In terms of biological role, dioxygenase that plays a key role in active DNA demethylation. As isoform 1, binds to promoters, particularly to those with high CG content, however displays reduced global chromatin affinity compared with isoform 1, leading to decreased global DNA demethylation compared with isoform 1. Contrary to isoform 1, isoform 2 localizes during S phase to sites of ongoing DNA replication in heterochromatin, causing a significant de novo 5hmC formation, globally, and more so in heterochromatin, including LINE 1 interspersed DNA repeats leading to their activation. In hippocampal neurons, isoform 2 regulates the expression of a unique subset of genes compared to isoform 1, although some overlap between both isoforms, hence differentially regulates excitatory synaptic transmission. In hippocampal neuron cell cultures, isoform 2 controls miniature excitatory postsynaptic current frequency, but not amplitude. Isoform 2 may regulate genes involved in hippocampal-dependent memory, leading to negative regulation of memory, contrary to isoform 1 that may improve memory. In immature and partially differentiated gonadotrope cells, directly represses luteinizing hormone gene LHB expression and does not catalyze 5hmC at the gene promoter. The protein is Methylcytosine dioxygenase TET1 of Homo sapiens (Human).